A 639-amino-acid polypeptide reads, in one-letter code: 1-deoxy-D-xylulose-5-phosphate synthase 1 (639 aa).

Residues H79 and 120–122 (AHS) contribute to the thiamine diphosphate site. D155 lines the Mg(2+) pocket. Residues 156–157 (GA), N184, Y293, and E373 each bind thiamine diphosphate. N184 lines the Mg(2+) pocket.

Belongs to the transketolase family. DXPS subfamily. As to quaternary structure, homodimer. Requires Mg(2+) as cofactor. It depends on thiamine diphosphate as a cofactor.

The catalysed reaction is D-glyceraldehyde 3-phosphate + pyruvate + H(+) = 1-deoxy-D-xylulose 5-phosphate + CO2. Its pathway is metabolic intermediate biosynthesis; 1-deoxy-D-xylulose 5-phosphate biosynthesis; 1-deoxy-D-xylulose 5-phosphate from D-glyceraldehyde 3-phosphate and pyruvate: step 1/1. Its function is as follows. Catalyzes the acyloin condensation reaction between C atoms 2 and 3 of pyruvate and glyceraldehyde 3-phosphate to yield 1-deoxy-D-xylulose-5-phosphate (DXP). This Jannaschia sp. (strain CCS1) protein is 1-deoxy-D-xylulose-5-phosphate synthase 1.